The following is a 405-amino-acid chain: Coenzyme F420 hydrogenase subunit alpha (405 aa).

Cys63, Cys66, Cys380, and Cys383 together coordinate Ni(2+).

This sequence belongs to the [NiFe]/[NiFeSe] hydrogenase large subunit family. In terms of assembly, heterocomplex of the form (alpha(1)beta(1)gamma(1))(8). The cofactor is Ni(2+). It depends on iron-sulfur cluster as a cofactor. FAD is required as a cofactor.

It catalyses the reaction oxidized coenzyme F420-(gamma-L-Glu)(n) + H2 + H(+) = reduced coenzyme F420-(gamma-L-Glu)(n). Its function is as follows. Reduces the physiological low-potential two-electron acceptor coenzyme F420, and the artificial one-electron acceptor methylviologen. The chain is Coenzyme F420 hydrogenase subunit alpha (frhA) from Methanothermobacter thermautotrophicus (strain ATCC 29096 / DSM 1053 / JCM 10044 / NBRC 100330 / Delta H) (Methanobacterium thermoautotrophicum).